A 297-amino-acid polypeptide reads, in one-letter code: 4-hydroxy-tetrahydrodipicolinate synthase (297 aa).

Residue threonine 55 participates in pyruvate binding. Tyrosine 144 functions as the Proton donor/acceptor in the catalytic mechanism. The active-site Schiff-base intermediate with substrate is the lysine 172. Isoleucine 213 contributes to the pyruvate binding site.

It belongs to the DapA family. As to quaternary structure, homotetramer; dimer of dimers.

The protein resides in the cytoplasm. It catalyses the reaction L-aspartate 4-semialdehyde + pyruvate = (2S,4S)-4-hydroxy-2,3,4,5-tetrahydrodipicolinate + H2O + H(+). The protein operates within amino-acid biosynthesis; L-lysine biosynthesis via DAP pathway; (S)-tetrahydrodipicolinate from L-aspartate: step 3/4. In terms of biological role, catalyzes the condensation of (S)-aspartate-beta-semialdehyde [(S)-ASA] and pyruvate to 4-hydroxy-tetrahydrodipicolinate (HTPA). This chain is 4-hydroxy-tetrahydrodipicolinate synthase, found in Lactococcus lactis subsp. cremoris (strain MG1363).